The following is a 426-amino-acid chain: Transcriptional enhancer factor TEF-1 (426 aa).

M1 bears the N-acetylmethionine mark. Residues 1-12 (MEPSSWSGSESP) show a composition bias toward polar residues. The disordered stretch occupies residues 1–31 (MEPSSWSGSESPAENMERMSDSADKPIDNDA). S11 carries the post-translational modification Phosphoserine. Over residues 15 to 28 (NMERMSDSADKPID) the composition is skewed to basic and acidic residues. The TEA DNA-binding region spans 28-104 (DNDAEGVWSP…QVLARRKSRD (77 aa)). K108 is subject to N6-lactoyllysine. The interval 167–426 (GSSQDVKPFV…QHHIYRLVKD (260 aa)) is transcriptional activation.

In terms of assembly, interacts with YAP1 and WWTR1/TAZ. Lactylation by AARS1 promotes nuclear localization and stabilization of YAP1, leading to increased Hippo signaling pathway. Delactylated by SIRT1. In terms of tissue distribution, in developing skeletal muscle and myocardium, in mitotic neuroblasts both in the brain and spinal cord. At later stages of embryogenesis expressed in several developing structures such as the olfactory system, the intestine, and the kidney.

It localises to the nucleus. In terms of biological role, transcription factor which plays a key role in the Hippo signaling pathway, a pathway involved in organ size control and tumor suppression by restricting proliferation and promoting apoptosis. The core of this pathway is composed of a kinase cascade wherein MST1/MST2, in complex with its regulatory protein SAV1, phosphorylates and activates LATS1/2 in complex with its regulatory protein MOB1, which in turn phosphorylates and inactivates YAP1 oncoprotein and WWTR1/TAZ. Acts by mediating gene expression of YAP1 and WWTR1/TAZ, thereby regulating cell proliferation, migration and epithelial mesenchymal transition (EMT) induction. Binds specifically and cooperatively to the SPH and GT-IIC 'enhansons' (5'-GTGGAATGT-3') and activates transcription in vivo in a cell-specific manner. The activation function appears to be mediated by a limiting cell-specific transcriptional intermediary factor (TIF). Involved in cardiac development. Binds to the M-CAT motif. In Mus musculus (Mouse), this protein is Transcriptional enhancer factor TEF-1 (Tead1).